The primary structure comprises 409 residues: All trans-polyprenyl-diphosphate synthase PDSS1 (409 aa).

Isopentenyl diphosphate is bound by residues Lys128, Arg131, and His167. Residues Asp174 and Asp178 each coordinate Mg(2+). Residue Arg184 coordinates isopentenyl diphosphate.

This sequence belongs to the FPP/GGPP synthase family. Heterotetramer composed of 2 PDSS1/DPS1 and 2 PDSS2/DLP1 subunits. It depends on Mg(2+) as a cofactor.

The protein resides in the mitochondrion. It carries out the reaction 7 isopentenyl diphosphate + (2E,6E)-farnesyl diphosphate = all-trans-decaprenyl diphosphate + 7 diphosphate. It catalyses the reaction 6 isopentenyl diphosphate + (2E,6E)-farnesyl diphosphate = all-trans-nonaprenyl diphosphate + 6 diphosphate. Its pathway is cofactor biosynthesis; ubiquinone biosynthesis. Its function is as follows. Heterotetrameric enzyme that catalyzes the condensation of farnesyl diphosphate (FPP), which acts as a primer, and isopentenyl diphosphate (IPP) to produce prenyl diphosphates of varying chain lengths and participates in the determination of the side chain of ubiquinone. Supplies nona and decaprenyl diphosphate, the precursors for the side chain of the isoprenoid quinones ubiquinone-9 (Q9)and ubiquinone-10 (Q10) respectively. The enzyme adds isopentenyl diphosphate molecules sequentially to farnesyl diphosphate with trans stereochemistry. The sequence is that of All trans-polyprenyl-diphosphate synthase PDSS1 from Mus musculus (Mouse).